A 208-amino-acid chain; its full sequence is MCKGLAALPATCLKSAKDMKHRLGVLLQKSDSCDYGSSQGKKEKVSSSQRVSQEEVKKWAESLENLIHHDRGLAAFRAFLKSEYSEENIEFWVSCEDYKKTKSPAKLSTKARKIYDEFISVQATKEVNLDSCTREKTSHNMLEPTLSCFDEAQRKIFTLMEKDSYRRFLKSPYLDLVSPPRAGCGPENCKRAHAHALDCNSNIISQCA.

3 S-palmitoyl cysteine lipidation sites follow: Cys-2, Cys-12, and Cys-95. An RGS domain is found at 62 to 178 (SLENLIHHDR…LKSPYLDLVS (117 aa)).

In terms of processing, palmitoylated on Cys-2 and/or Cys-12. Phosphorylated by cyclic GMP-dependent protein kinase. Expressed in the developing nervous system.

Inhibits signal transduction by increasing the GTPase activity of G protein alpha subunits thereby driving them into their inactive GDP-bound form. Activity on G(z)-alpha is inhibited by phosphorylation of the G-protein. Activity on G(z)-alpha and G(i)-alpha-1 is inhibited by palmitoylation of the G-protein. This chain is Regulator of G-protein signaling 4 (RGS4), found in Gallus gallus (Chicken).